We begin with the raw amino-acid sequence, 204 residues long: Large ribosomal subunit protein eL15y (204 aa).

It belongs to the eukaryotic ribosomal protein eL15 family.

The sequence is that of Large ribosomal subunit protein eL15y (SB62) from Picea mariana (Black spruce).